We begin with the raw amino-acid sequence, 155 residues long: SsrA-binding protein (155 aa).

Positions 127–149 (KKDYDKRNDMRKKEAKREMERTF) are enriched in basic and acidic residues. The interval 127-155 (KKDYDKRNDMRKKEAKREMERTFKSKNQY) is disordered.

This sequence belongs to the SmpB family.

The protein localises to the cytoplasm. Required for rescue of stalled ribosomes mediated by trans-translation. Binds to transfer-messenger RNA (tmRNA), required for stable association of tmRNA with ribosomes. tmRNA and SmpB together mimic tRNA shape, replacing the anticodon stem-loop with SmpB. tmRNA is encoded by the ssrA gene; the 2 termini fold to resemble tRNA(Ala) and it encodes a 'tag peptide', a short internal open reading frame. During trans-translation Ala-aminoacylated tmRNA acts like a tRNA, entering the A-site of stalled ribosomes, displacing the stalled mRNA. The ribosome then switches to translate the ORF on the tmRNA; the nascent peptide is terminated with the 'tag peptide' encoded by the tmRNA and targeted for degradation. The ribosome is freed to recommence translation, which seems to be the essential function of trans-translation. In Lysinibacillus sphaericus (strain C3-41), this protein is SsrA-binding protein.